The following is a 90-amino-acid chain: Probable Fe(2+)-trafficking protein (90 aa).

Belongs to the Fe(2+)-trafficking protein family.

In terms of biological role, could be a mediator in iron transactions between iron acquisition and iron-requiring processes, such as synthesis and/or repair of Fe-S clusters in biosynthetic enzymes. This is Probable Fe(2+)-trafficking protein from Pseudomonas putida (strain W619).